A 289-amino-acid chain; its full sequence is Palmitoyl-protein thioesterase 3 (289 aa).

The N-terminal stretch at 1 to 20 (MRILSSLILLIALAIALVSA) is a signal peptide. Serine 97 is a catalytic residue. 2 N-linked (GlcNAc...) asparagine glycosylation sites follow: asparagine 189 and asparagine 195. Active-site residues include aspartate 210 and histidine 266. The N-linked (GlcNAc...) asparagine glycan is linked to asparagine 281.

Belongs to the palmitoyl-protein thioesterase family.

Its subcellular location is the lysosome. The catalysed reaction is S-hexadecanoyl-L-cysteinyl-[protein] + H2O = L-cysteinyl-[protein] + hexadecanoate + H(+). In terms of biological role, removes thioester-linked fatty acyl groups such as palmitate from modified cysteine residues in proteins or peptides during lysosomal degradation. The chain is Palmitoyl-protein thioesterase 3 (ppt3) from Dictyostelium discoideum (Social amoeba).